Reading from the N-terminus, the 646-residue chain is Nucleoside triphosphatase I (646 aa).

Positions 48–213 (FIGLKNLNSM…NNLIGLLRPN (166 aa)) constitute a Helicase ATP-binding domain. 61–68 (WDTGMGKT) contributes to the ATP binding site. A DEXH box motif is present at residues 151–154 (DEVH). One can recognise a Helicase C-terminal domain in the interval 377–540 (YIEACRIILN…KINVVFDLLK (164 aa)). Residues 466 to 532 (DIIILDMPWN…DIIKDKQSKI (67 aa)) are binding to the cap-specific mRNA (nucleoside-2'-O-)-methyltransferase.

Belongs to the helicase family. NPH I subfamily. In terms of assembly, monomer. Interacts (via C-terminus) with RAP94 (via N-terminus). Interacts with the cap-specific mRNA (nucleoside-2'-O-)-methyltransferase.

The protein localises to the virion. It carries out the reaction a ribonucleoside 5'-triphosphate + H2O = a ribonucleoside 5'-diphosphate + phosphate + H(+). Functionally, DNA-dependent ATPase required for providing the needed energy to achieve the termination of early transcripts. Acts in concert with the RAP94 subunit of the virion RNA polymerase and the capping enzyme/VTF to catalyze release of UUUUUNU-containing nascent RNA from the elongation complex. NPH-I must bind ssDNA in order to exhibit ATPase activity. This is Nucleoside triphosphatase I (NPH1) from Heliothis armigera entomopoxvirus (HaEPV).